The chain runs to 232 residues: Phosphoribosylformylglycinamidine synthase subunit PurQ (232 aa).

Residues 2-232 (KIAILQFGGT…SMVDYITENF (231 aa)) enclose the Glutamine amidotransferase type-1 domain. Catalysis depends on Cys-86, which acts as the Nucleophile. Catalysis depends on residues His-203 and Glu-205.

In terms of assembly, part of the FGAM synthase complex composed of 1 PurL, 1 PurQ and 2 PurS subunits.

It is found in the cytoplasm. It catalyses the reaction N(2)-formyl-N(1)-(5-phospho-beta-D-ribosyl)glycinamide + L-glutamine + ATP + H2O = 2-formamido-N(1)-(5-O-phospho-beta-D-ribosyl)acetamidine + L-glutamate + ADP + phosphate + H(+). The enzyme catalyses L-glutamine + H2O = L-glutamate + NH4(+). Its pathway is purine metabolism; IMP biosynthesis via de novo pathway; 5-amino-1-(5-phospho-D-ribosyl)imidazole from N(2)-formyl-N(1)-(5-phospho-D-ribosyl)glycinamide: step 1/2. Its function is as follows. Part of the phosphoribosylformylglycinamidine synthase complex involved in the purines biosynthetic pathway. Catalyzes the ATP-dependent conversion of formylglycinamide ribonucleotide (FGAR) and glutamine to yield formylglycinamidine ribonucleotide (FGAM) and glutamate. The FGAM synthase complex is composed of three subunits. PurQ produces an ammonia molecule by converting glutamine to glutamate. PurL transfers the ammonia molecule to FGAR to form FGAM in an ATP-dependent manner. PurS interacts with PurQ and PurL and is thought to assist in the transfer of the ammonia molecule from PurQ to PurL. The protein is Phosphoribosylformylglycinamidine synthase subunit PurQ of Methanosarcina barkeri (strain Fusaro / DSM 804).